The sequence spans 288 residues: Dichloromethane dehalogenase (288 aa).

The GST N-terminal domain maps to Lys-12–Gly-94. The 153-residue stretch at Gly-100–Val-252 folds into the GST C-terminal domain.

It belongs to the GST superfamily. In terms of assembly, homohexamer.

Its subcellular location is the cytoplasm. The enzyme catalyses dichloromethane + H2O = formaldehyde + 2 chloride + 2 H(+). It functions in the pathway xenobiotic degradation; dichloromethane degradation. The sequence is that of Dichloromethane dehalogenase (dcmA) from Methylorubrum extorquens (strain DSM 6343 / CIP 106787 / DM4) (Methylobacterium extorquens).